The primary structure comprises 647 residues: Leucine aminopeptidase 2 (647 aa).

Substrate is bound by residues 169–171 and 295–300; these read QCQ and PYGGME. Residue H324 participates in Zn(2+) binding. Residue E325 is the Proton acceptor of the active site. Residues H328 and E347 each contribute to the Zn(2+) site. Y418 acts as the Proton donor in catalysis.

This sequence belongs to the peptidase M1 family. Zn(2+) is required as a cofactor.

The protein localises to the cytoplasm. Its subcellular location is the nucleus. The enzyme catalyses an epoxide + H2O = an ethanediol. Functionally, aminopeptidase that preferentially cleaves di- and tripeptides. Also has low epoxide hydrolase activity (in vitro). Can hydrolyze the epoxide leukotriene LTA(4) but it forms preferentially 5,6-dihydroxy-7,9,11,14-eicosatetraenoic acid rather than the cytokine leukotriene B(4) as the product compared to the homologous mammalian enzyme (in vitro). This is Leucine aminopeptidase 2 from Yarrowia lipolytica (strain CLIB 122 / E 150) (Yeast).